A 508-amino-acid polypeptide reads, in one-letter code: MGLPWYRVHTVVLNDPGRLLSVHIMHTALVAGWAGSMALYELAVFDPSDPVLDPMWRQGMFVIPFMTRLGITNSWGGWNITGGTITNPGLWSYEGVAGAHIVFSGLCFLAAIWHWVYWDLEIFCDERTGKPSLDLPKIFGIHLFLSGVACFGFGAFHVTGLYGPGIWVSDPYGLTGKVQPVNPAWGVEGFDPFVPGGIASHHIAAGTLGILAGLFHLSVRPPQRLYKGLRMGNIETVLSSSIAAVFFAAFVVAGTMWYGSATTPIELFGPTRYQWDQGYFQQEIYRRVSAGLAENQSLSEAWSKIPEKLAFYDYIGNNPAKGGLFRAGSMDNGDGIAVGWLGHPVFRNKEGRELFVRRMPTFFETFPVVLVDGDGIVRADVPFRRAESKYSVEQVGVTVEFYGGELNGVSYSDPATVKKYARRAQLGEVFELDRATLKSDGVFRSSPRGWFTFGHASFALLFFFGHIWHGARTLFRDVFAGIDPDLDAQVEFGAFQKLGDPTTKRQAV.

6 consecutive transmembrane segments (helical) span residues 21 to 36 (SVHI…WAGS), 101 to 115 (IVFS…IWHW), 140 to 156 (GIHL…FGAF), 203 to 218 (IAAG…FHLS), 237 to 252 (VLSS…AFVV), and 457 to 472 (SFAL…HGAR).

It belongs to the PsbB/PsbC family. PsbB subfamily. In terms of assembly, PSII is composed of 1 copy each of membrane proteins PsbA, PsbB, PsbC, PsbD, PsbE, PsbF, PsbH, PsbI, PsbJ, PsbK, PsbL, PsbM, PsbT, PsbX, PsbY, PsbZ, Psb30/Ycf12, at least 3 peripheral proteins of the oxygen-evolving complex and a large number of cofactors. It forms dimeric complexes. The cofactor is Binds multiple chlorophylls. PSII binds additional chlorophylls, carotenoids and specific lipids..

It localises to the plastid. The protein localises to the chloroplast thylakoid membrane. Its function is as follows. One of the components of the core complex of photosystem II (PSII). It binds chlorophyll and helps catalyze the primary light-induced photochemical processes of PSII. PSII is a light-driven water:plastoquinone oxidoreductase, using light energy to abstract electrons from H(2)O, generating O(2) and a proton gradient subsequently used for ATP formation. The chain is Photosystem II CP47 reaction center protein from Nasturtium officinale (Watercress).